Consider the following 382-residue polypeptide: Exostosin-1 homolog (382 aa).

The first 20 residues, 1-20, serve as a signal peptide directing secretion; that stretch reads MQNVMKFHLVIFMLFGSVRL. An N-linked (GlcNAc...) asparagine glycan is attached at N268.

This sequence belongs to the glycosyltransferase 47 family. In terms of assembly, interacts with rib-2.

It is found in the endoplasmic reticulum. The protein localises to the golgi apparatus. Its function is as follows. Required for the biosynthesis of heparan sulfate by positively regulating N-acetylglucosamine transferase II (GlcNAcT-II) and glucuronyl transferase II (GlcAT-II) activities of glycosyltransferase rib-2. Probably not directly involved in chondroitin sulfate biosynthesis but negatively regulates chondroitin sulfate levels. Maternally required for normal ventral epidermal enclosure and for embryo elongation during the early stages of embryonic development. In addition, involved in the elongation of the pharyngeal isthmus and in the organization of the actin cytoskeleton in the pharyngeal muscles during the later stages embryonic development. In adults, regulates egg-laying and the normal morphogenesis of the vulva. Also involved in the directed migration of hermaphrodite-specific neurons. The sequence is that of Exostosin-1 homolog (rib-1) from Caenorhabditis elegans.